Consider the following 57-residue polypeptide: COP9 signalosome complex subunit 9 (57 aa).

The protein belongs to the CSN9 family. In terms of assembly, component of the CSN complex, probably composed of cops1, cops2, cops3, cops4, cops5, cops6, cops7, cops8 and cops9.

It is found in the nucleus. The protein localises to the cytoplasm. Its subcellular location is the nucleoplasm. Its function is as follows. Component of the COP9 signalosome complex (CSN), a complex involved in various cellular and developmental processes. The CSN complex is an essential regulator of the ubiquitin (Ubl) conjugation pathway by mediating the deneddylation of the cullin subunits of SCF-type E3 ligase complexes, leading to decrease the Ubl ligase activity. May play a role in cell proliferation. The polypeptide is COP9 signalosome complex subunit 9 (Xenopus laevis (African clawed frog)).